The following is a 26-amino-acid chain: Probable early E4 17 kDa protein (26 aa).

This is Probable early E4 17 kDa protein from Homo sapiens (Human).